The primary structure comprises 370 residues: 3-dehydroquinate synthase (370 aa).

Residues 108–112, 132–133, Lys-145, and Lys-154 each bind NAD(+); these read GVIGD and TT. Positions 187, 249, and 267 each coordinate Zn(2+).

Belongs to the sugar phosphate cyclases superfamily. Dehydroquinate synthase family. Co(2+) serves as cofactor. Requires Zn(2+) as cofactor. It depends on NAD(+) as a cofactor.

Its subcellular location is the cytoplasm. The catalysed reaction is 7-phospho-2-dehydro-3-deoxy-D-arabino-heptonate = 3-dehydroquinate + phosphate. Its pathway is metabolic intermediate biosynthesis; chorismate biosynthesis; chorismate from D-erythrose 4-phosphate and phosphoenolpyruvate: step 2/7. Functionally, catalyzes the conversion of 3-deoxy-D-arabino-heptulosonate 7-phosphate (DAHP) to dehydroquinate (DHQ). This Cereibacter sphaeroides (strain KD131 / KCTC 12085) (Rhodobacter sphaeroides) protein is 3-dehydroquinate synthase.